Here is a 55-residue protein sequence, read N- to C-terminus: Small ribosomal subunit protein bS21 (55 aa).

Belongs to the bacterial ribosomal protein bS21 family.

The chain is Small ribosomal subunit protein bS21 from Phytoplasma mali (strain AT).